Consider the following 495-residue polypeptide: Tripartite motif-containing protein 5 (495 aa).

The residue at position 2 (Ala-2) is an N-acetylalanine. The RING-type zinc-finger motif lies at 15-60 (CPICLELLTEPLSLPCGHSFCQACITANHKKSMLYKEEERSCPVCR). Ser-87 carries the phosphoserine modification. A B box-type zinc finger spans residues 92–133 (QKVDHCARHGEKLLLFCQEDRKVICWLCERSQEHRGHHTFLM). Residues Cys-97, His-100, Cys-119, and His-125 each contribute to the Zn(2+) site. Residues 137–177 (AQEYHVKLQTALEMLRQKQQEAEKLEADIREEKASWKIQID) adopt a coiled-coil conformation. A required for interaction with GABARAP and for autophagy region spans residues 187-200 (FEQLREILDWEESN). A B30.2/SPRY domain is found at 283–495 (LKGMLDMFRE…VPMTLCSPSS (213 aa)).

This sequence belongs to the TRIM/RBCC family. Can form homodimers and homotrimers. In addition to lower-order dimerization, also exhibits a higher-order multimerization and both low- and high-order multimerizations are essential for its restriction activity. Interacts with BTBD1 and BTBD2. Interacts with PSMC4, PSMC5, PSMD7 and HSPA8/HSC70. Interacts (via B30.2/SPRY domain) with HSPA1A/B. Interacts with PSMC2, MAP3K7/TAK1, TAB2 and TAB3. Interacts with SQSTM1. Interacts with TRIM6 and TRIM34. Interacts with ULK1 (phosphorylated form), GABARAP, GABARAPL1, GABARAPL2, MAP1LC3A, MAP1LC3C and BECN1. In terms of processing, degraded in a proteasome-independent fashion in the absence of viral infection but in a proteasome-dependent fashion following exposure to restriction sensitive virus. Autoubiquitinated in a RING finger- and UBE2D2-dependent manner. Monoubiquitinated by TRIM21. Deubiquitinated by Yersinia YopJ. Ubiquitination may not lead to proteasomal degradation.

The protein resides in the cytoplasm. It localises to the nucleus. The catalysed reaction is S-ubiquitinyl-[E2 ubiquitin-conjugating enzyme]-L-cysteine + [acceptor protein]-L-lysine = [E2 ubiquitin-conjugating enzyme]-L-cysteine + N(6)-ubiquitinyl-[acceptor protein]-L-lysine.. It functions in the pathway protein modification; protein ubiquitination. Its function is as follows. Capsid-specific restriction factor that prevents infection from non-host-adapted retroviruses. Blocks viral replication early in the life cycle, after viral entry but before reverse transcription. In addition to acting as a capsid-specific restriction factor, also acts as a pattern recognition receptor that activates innate immune signaling in response to the retroviral capsid lattice. Binding to the viral capsid triggers its E3 ubiquitin ligase activity, and in concert with the heterodimeric ubiquitin conjugating enzyme complex UBE2V1-UBE2N (also known as UBC13-UEV1A complex) generates 'Lys-63'-linked polyubiquitin chains, which in turn are catalysts in the autophosphorylation of the MAP3K7/TAK1 complex (includes TAK1, TAB2, and TAB3). Activation of the MAP3K7/TAK1 complex by autophosphorylation results in the induction and expression of NF-kappa-B and MAPK-responsive inflammatory genes, thereby leading to an innate immune response in the infected cell. Plays a role in regulating autophagy through activation of autophagy regulator BECN1 by causing its dissociation from its inhibitors BCL2 and TAB2. This chain is Tripartite motif-containing protein 5 (TRIM5), found in Erythrocebus patas (Red guenon).